Here is a 211-residue protein sequence, read N- to C-terminus: Uridine kinase (211 aa).

12–19 lines the ATP pocket; the sequence is GGSGSGKT.

This sequence belongs to the uridine kinase family.

The protein resides in the cytoplasm. The catalysed reaction is uridine + ATP = UMP + ADP + H(+). It catalyses the reaction cytidine + ATP = CMP + ADP + H(+). The protein operates within pyrimidine metabolism; CTP biosynthesis via salvage pathway; CTP from cytidine: step 1/3. It functions in the pathway pyrimidine metabolism; UMP biosynthesis via salvage pathway; UMP from uridine: step 1/1. The chain is Uridine kinase from Geobacillus kaustophilus (strain HTA426).